The primary structure comprises 216 residues: Peptide methionine sulfoxide reductase MsrA (216 aa).

The active site involves C57.

The protein belongs to the MsrA Met sulfoxide reductase family.

It catalyses the reaction L-methionyl-[protein] + [thioredoxin]-disulfide + H2O = L-methionyl-(S)-S-oxide-[protein] + [thioredoxin]-dithiol. The enzyme catalyses [thioredoxin]-disulfide + L-methionine + H2O = L-methionine (S)-S-oxide + [thioredoxin]-dithiol. In terms of biological role, has an important function as a repair enzyme for proteins that have been inactivated by oxidation. Catalyzes the reversible oxidation-reduction of methionine sulfoxide in proteins to methionine. The chain is Peptide methionine sulfoxide reductase MsrA from Agrobacterium fabrum (strain C58 / ATCC 33970) (Agrobacterium tumefaciens (strain C58)).